Here is a 186-residue protein sequence, read N- to C-terminus: Thymidine kinase (186 aa).

Residue 8–15 coordinates ATP; sequence GPMYSGKT. Glu-86 acts as the Proton acceptor in catalysis. Phe-118 is a binding site for substrate. 2 residues coordinate Zn(2+): Cys-143 and Cys-146. A substrate-binding site is contributed by 162–166; sequence IIEIG. Zn(2+)-binding residues include Cys-175 and Cys-178.

The protein belongs to the thymidine kinase family.

The enzyme catalyses thymidine + ATP = dTMP + ADP + H(+). The sequence is that of Thymidine kinase (TK) from Choristoneura fumiferana (Spruce budworm moth).